A 574-amino-acid polypeptide reads, in one-letter code: Methionine--tRNA ligase (574 aa).

A 'HIGH' region motif is present at residues 11–21 (PYINGIKHLGN). Zn(2+) is bound by residues Cys143, Cys146, Cys156, and Cys159. The 'KMSKS' region signature appears at 345-349 (KFSTS). Thr348 contacts ATP.

It belongs to the class-I aminoacyl-tRNA synthetase family. MetG type 1 subfamily. In terms of assembly, monomer. Zn(2+) is required as a cofactor.

The protein localises to the cytoplasm. It catalyses the reaction tRNA(Met) + L-methionine + ATP = L-methionyl-tRNA(Met) + AMP + diphosphate. Its function is as follows. Is required not only for elongation of protein synthesis but also for the initiation of all mRNA translation through initiator tRNA(fMet) aminoacylation. The polypeptide is Methionine--tRNA ligase (Streptomyces avermitilis (strain ATCC 31267 / DSM 46492 / JCM 5070 / NBRC 14893 / NCIMB 12804 / NRRL 8165 / MA-4680)).